The following is a 241-amino-acid chain: Centromere protein H (241 aa).

Met1 is subject to N-acetylmethionine. The interval 1 to 24 (MEEQPRERSEAGAEACEEKRGLSQ) is disordered. Positions 28 to 186 (ERIEDRISLL…KEDVDKMENS (159 aa)) form a coiled coil. Residue Lys61 forms a Glycyl lysine isopeptide (Lys-Gly) (interchain with G-Cter in SUMO2) linkage. The residue at position 62 (Thr62) is a Phosphothreonine.

It belongs to the CENP-H/MCM16 family. As to quaternary structure, self-associates. Component of the CENPA-NAC complex, at least composed of CENPA, CENPC, CENPH, CENPM, CENPN, CENPT and CENPU. The CENPA-NAC complex interacts with the CENPA-CAD complex, composed of CENPI, CENPK, CENPL, CENPO, CENPP, CENPQ, CENPR and CENPS. Interacts directly with CENPK. Interacts with KIF2C and NDC80. Interacts with TRIM36. As to expression, abundantly expressed in thymus, spleen, uterus, ovary, testis and muscle, and weakly expressed in small intestine, lung and stomach. Barely detectable expression in kidney, liver, skin and prostate gland. Not detected in brain, heart or adrenal gland. Also expressed weakly in various hematopoietic cell lines.

It is found in the nucleus. It localises to the chromosome. Its subcellular location is the centromere. The protein resides in the kinetochore. Its function is as follows. Component of the CENPA-NAC (nucleosome-associated) complex, a complex that plays a central role in assembly of kinetochore proteins, mitotic progression and chromosome segregation. The CENPA-NAC complex recruits the CENPA-CAD (nucleosome distal) complex and may be involved in incorporation of newly synthesized CENPA into centromeres. Required for chromosome congression and efficiently align the chromosomes on a metaphase plate. The protein is Centromere protein H of Mus musculus (Mouse).